The primary structure comprises 523 residues: Thiamine pathway transporter THI73 (523 aa).

The Cytoplasmic portion of the chain corresponds to methionine 1–aspartate 79. A helical membrane pass occupies residues leucine 80–leucine 100. The Extracellular portion of the chain corresponds to asparagine 101 to serine 118. A helical membrane pass occupies residues asparagine 119 to isoleucine 139. The Cytoplasmic portion of the chain corresponds to glutamine 140 to lysine 141. A helical membrane pass occupies residues phenylalanine 142 to histidine 162. Over alanine 163 to threonine 176 the chain is Extracellular. The chain crosses the membrane as a helical span at residues leucine 177–tyrosine 197. The Cytoplasmic segment spans residues threonine 198–glycine 207. A helical transmembrane segment spans residues phenylalanine 208–leucine 228. At histidine 229–glutamine 239 the chain is on the extracellular side. A helical transmembrane segment spans residues isoleucine 240–leucine 260. Residues proline 261–methionine 312 are Cytoplasmic-facing. Residues leucine 313 to isoleucine 333 traverse the membrane as a helical segment. The Extracellular segment spans residues threonine 334–alanine 345. The helical transmembrane segment at leucine 346–leucine 366 threads the bilayer. Residues serine 367–histidine 371 lie on the Cytoplasmic side of the membrane. The helical transmembrane segment at isoleucine 372–serine 392 threads the bilayer. The Extracellular portion of the chain corresponds to leucine 393–glycine 400. Residues asparagine 401 to tryptophan 421 form a helical membrane-spanning segment. The Cytoplasmic segment spans residues asparagine 422–arginine 432. Residues valine 433 to glutamine 452 form a helical membrane-spanning segment. At methionine 453–lysine 466 the chain is on the extracellular side. A helical transmembrane segment spans residues isoleucine 467–cysteine 487. At lysine 488–tyrosine 523 the chain is on the cytoplasmic side.

It belongs to the major facilitator superfamily. Allantoate permease family.

The protein localises to the endoplasmic reticulum membrane. It localises to the cell membrane. Functionally, transports either thiamine or, rather, a related metabolite involved in the thiamine biosynthesis pathway. This chain is Thiamine pathway transporter THI73 (THI73), found in Saccharomyces cerevisiae (strain ATCC 204508 / S288c) (Baker's yeast).